The chain runs to 153 residues: Transcriptional repressor NrdR (153 aa).

The segment at cysteine 3 to cysteine 34 is a zinc-finger region. An ATP-cone domain is found at phenylalanine 49–aspartate 139.

The protein belongs to the NrdR family. The cofactor is Zn(2+).

Its function is as follows. Negatively regulates transcription of bacterial ribonucleotide reductase nrd genes and operons by binding to NrdR-boxes. This is Transcriptional repressor NrdR from Ehrlichia chaffeensis (strain ATCC CRL-10679 / Arkansas).